The primary structure comprises 335 residues: MGKLEDVEAEKKLWESDDAWELRKAFMLAHYDDYPKIQLQCLSQLFINVTLLGCEYSQTLMQKIRTMGAGIAANKDRTKTGSYVKASAAKKRQAVKTSDLEGASDESKKVKMEKSPSPVARESFDERLGKLKASLAMTPHHLTGEQMMKTATNSCLMKWHVNKINQKIEITIDRYVAFRHTFSQYCVDPRDCAINTLIESILSCDAAVHEESYEIRFDGVPVDECYAKSVTRRLAKIKSAVSNGAHTVKGLTTYLDAVNMSMIQNTQKLEGWSQQLDLVTADLLLSSRVLSSTECTKPAMATIANQMSEDVCQLILNDKINVINSMKSHSSLAFQ.

Residues 7–91 (VEAEKKLWES…SYVKASAAKK (85 aa)) enclose the XRN2-binding (XTBD) domain. The tract at residues 95 to 119 (VKTSDLEGASDESKKVKMEKSPSPV) is disordered. The segment covering 105 to 114 (DESKKVKMEK) has biased composition (basic and acidic residues).

Interacts (via N-terminus) with xrn-2; the interaction is direct.

It localises to the nucleus. The protein resides in the nucleolus. Its subcellular location is the nucleoplasm. Plays a role in maintenance of steady-state concentration and turnover of microRNAs (miRNA) by degradation of mature miRNA in complex with the exoribonuclease xrn-2. Stabilizes and enhances the accumulation and activity of the exoribonuclease xrn-2, and thus contributes to miRNA turnover. The sequence is that of Partner of xrn-2 protein 1 from Caenorhabditis elegans.